Here is a 386-residue protein sequence, read N- to C-terminus: WD repeat-containing protein 89 (386 aa).

6 WD repeats span residues 21-65 (KEPT…LLRE), 68-107 (GSPG…EKPA), 112-156 (GYPS…QDLS), 167-207 (THSD…EEDA), 213-253 (NSVS…TDEP), and 318-357 (GHAA…KTFT).

The chain is WD repeat-containing protein 89 (Wdr89) from Rattus norvegicus (Rat).